Here is a 221-residue protein sequence, read N- to C-terminus: Superoxide dismutase [Mn] 1, mitochondrial (221 aa).

A mitochondrion-targeting transit peptide spans 1–24 (MLQNTVRCVSKLVQPITGVAAVRS). H50, H98, D182, and H186 together coordinate Mn(2+).

It belongs to the iron/manganese superoxide dismutase family. Homotetramer. Mn(2+) serves as cofactor.

The protein resides in the mitochondrion matrix. It carries out the reaction 2 superoxide + 2 H(+) = H2O2 + O2. In terms of biological role, destroys superoxide anion radicals which are normally produced within the cells and which are toxic to biological systems. In Caenorhabditis elegans, this protein is Superoxide dismutase [Mn] 1, mitochondrial (sod-2).